The primary structure comprises 135 residues: Classical arabinogalactan protein 4 (135 aa).

Positions 1–21 are cleaved as a signal peptide; that stretch reads MGSKIVQVFLMLALFATSALA. Gln22 carries the pyrrolidone carboxylic acid modification. Positions 22–112 are disordered; that stretch reads QAPAPTPTAT…PSDASPAPSA (91 aa). Pro24, Pro26, Pro28, Pro32, Pro33, Pro34, Pro37, Pro38, and Pro39 each carry 4-hydroxyproline. O-linked (Ara...) hydroxyproline glycans are attached at residues Pro24, Pro26, Pro28, Pro32, Pro33, Pro34, Pro37, Pro38, and Pro39. Residues 25-76 are compositionally biased toward pro residues; the sequence is APTPTATPPPATPPPVATPPPVATPPPAATPAPATPPPAATPAPATTPPSVA. Residues 96 to 112 are compositionally biased toward low complexity; sequence SPSSAPGPSDASPAPSA. Residue Ser111 is the site of GPI-anchor amidated serine attachment. Positions 112 to 135 are cleaved as a propeptide — removed in mature form; the sequence is AAFSNKAFFAGTAFAAIMYAAVLA.

The protein belongs to the classical AGP family. Post-translationally, O-glycosylated on hydroxyprolines; noncontiguous hydroxylproline residues are glycosylated with arabinogalactan. In terms of tissue distribution, highly expressed in roots, flowers and leaves.

Its subcellular location is the cell membrane. Its function is as follows. Proteoglycan that seems to be implicated in diverse developmental roles such as differentiation, cell-cell recognition, embryogenesis and programmed cell death. The protein is Classical arabinogalactan protein 4 (AGP4) of Arabidopsis thaliana (Mouse-ear cress).